Here is a 420-residue protein sequence, read N- to C-terminus: UDP-N-acetylglucosamine 1-carboxyvinyltransferase (420 aa).

Position 22–23 (22–23 (KN)) interacts with phosphoenolpyruvate. Residue arginine 93 coordinates UDP-N-acetyl-alpha-D-glucosamine. The active-site Proton donor is the cysteine 117. Cysteine 117 is modified (2-(S-cysteinyl)pyruvic acid O-phosphothioketal). UDP-N-acetyl-alpha-D-glucosamine contacts are provided by aspartate 307 and isoleucine 329.

It belongs to the EPSP synthase family. MurA subfamily.

The protein localises to the cytoplasm. It catalyses the reaction phosphoenolpyruvate + UDP-N-acetyl-alpha-D-glucosamine = UDP-N-acetyl-3-O-(1-carboxyvinyl)-alpha-D-glucosamine + phosphate. It functions in the pathway cell wall biogenesis; peptidoglycan biosynthesis. Functionally, cell wall formation. Adds enolpyruvyl to UDP-N-acetylglucosamine. This chain is UDP-N-acetylglucosamine 1-carboxyvinyltransferase, found in Shewanella pealeana (strain ATCC 700345 / ANG-SQ1).